A 238-amino-acid polypeptide reads, in one-letter code: MKYAGILAGGIGSRMGNVPLPKQFLDLDNKPILIHTLEKFILINDFEKIIIATPQQWMTHTKDTLRKFKISDERIEVIQGGSDRNDTIMNIVKHIESTNGINDDDVIVTHDAVRPFLTHRIIKENIQAALEYGAVDTVIDAIDTIVTSKDNQTIDAIPVRNEMYQGQTPQSFNINLLKESYAQLSDEQKSILSDACKIIVETNKPVRLVKGELYNIKVTTPYDLKVANAIIRGGIADD.

CTP contacts are provided by residues 7–10 (LAGG) and 81–87 (GSDRNDT).

It belongs to the IspD/TarI cytidylyltransferase family. TarI subfamily.

The catalysed reaction is D-ribitol 5-phosphate + CTP + H(+) = CDP-L-ribitol + diphosphate. It participates in cell wall biogenesis; poly(ribitol phosphate) teichoic acid biosynthesis. In terms of biological role, catalyzes the transfer of the cytidylyl group of CTP to D-ribitol 5-phosphate. The polypeptide is Ribitol-5-phosphate cytidylyltransferase 1 (Staphylococcus aureus (strain USA300)).